Here is a 367-residue protein sequence, read N- to C-terminus: Germination protease (367 aa).

A propeptide spanning residues 1–15 (MKEPLDLSKYSVRTD) is cleaved from the precursor.

The protein belongs to the peptidase A25 family. In terms of assembly, homotetramer. Post-translationally, autoproteolytically processed. The inactive tetrameric zymogen termed p46 autoprocesses to a smaller form termed p41, which is active only during spore germination.

The catalysed reaction is Endopeptidase action with P4 Glu or Asp, P1 preferably Glu &gt; Asp, P1' hydrophobic and P2' Ala.. Its function is as follows. Initiates the rapid degradation of small, acid-soluble proteins during spore germination. The chain is Germination protease from Bacillus cereus (strain G9842).